The following is a 698-amino-acid chain: Probable xyloglucan glycosyltransferase 2 (698 aa).

The next 2 membrane-spanning stretches (helical) occupy residues 124–144 (GFLA…WNGW) and 190–210 (ILLF…CFWI). Residue Asp272 is part of the active site. 2 residues coordinate substrate: Asp331 and Asp333. Asp425 is an active-site residue. A run of 4 helical transmembrane segments spans residues 503 to 523 (LILP…TMFV), 528 to 548 (LPVW…ILPS), 653 to 668 (LALS…RSLL), and 673 to 693 (IHFY…LDLI).

This sequence belongs to the glycosyltransferase 2 family. Plant cellulose synthase-like C subfamily.

It is found in the golgi apparatus membrane. Probable beta-1,4-glucan synthase rather involved in the synthesis of the xyloglucan backbone than cellulose. Seems to work simultaneously with xyloglucan 6-xylosyltransferase. Xyloglucan is a noncellulosic polysaccharides of plant cell wall and consists of a glucan backbone substituted by xylose, galactose and fucose. The polypeptide is Probable xyloglucan glycosyltransferase 2 (CSLC2) (Oryza sativa subsp. indica (Rice)).